A 447-amino-acid polypeptide reads, in one-letter code: Tubulin beta-1 chain (447 aa).

GTP is bound by residues Gln-11, Glu-69, Ser-138, Gly-142, Thr-143, Gly-144, Asn-204, and Asn-226. Glu-69 lines the Mg(2+) pocket. The segment covering 411–427 (AESNMNDLVSEYQQYQD) has biased composition (polar residues). The interval 411–447 (AESNMNDLVSEYQQYQDATADEEGDYEDEEEQVPEDE) is disordered. Over residues 429-447 (TADEEGDYEDEEEQVPEDE) the composition is skewed to acidic residues.

It belongs to the tubulin family. Dimer of alpha and beta chains. A typical microtubule is a hollow water-filled tube with an outer diameter of 25 nm and an inner diameter of 15 nM. Alpha-beta heterodimers associate head-to-tail to form protofilaments running lengthwise along the microtubule wall with the beta-tubulin subunit facing the microtubule plus end conferring a structural polarity. Microtubules usually have 13 protofilaments but different protofilament numbers can be found in some organisms and specialized cells. Mg(2+) is required as a cofactor. As to expression, expressed in leaf sheaths.

The protein resides in the cytoplasm. It localises to the cytoskeleton. Its function is as follows. Tubulin is the major constituent of microtubules, a cylinder consisting of laterally associated linear protofilaments composed of alpha- and beta-tubulin heterodimers. Microtubules grow by the addition of GTP-tubulin dimers to the microtubule end, where a stabilizing cap forms. Below the cap, tubulin dimers are in GDP-bound state, owing to GTPase activity of alpha-tubulin. This is Tubulin beta-1 chain (TUBB1) from Oryza sativa subsp. japonica (Rice).